The following is a 168-amino-acid chain: Small ribosomal subunit protein uS9 (168 aa).

Residues Met-1–Ala-11 show a composition bias toward low complexity. Positions Met-1–Arg-36 are disordered.

The protein belongs to the universal ribosomal protein uS9 family.

This is Small ribosomal subunit protein uS9 from Pseudarthrobacter chlorophenolicus (strain ATCC 700700 / DSM 12829 / CIP 107037 / JCM 12360 / KCTC 9906 / NCIMB 13794 / A6) (Arthrobacter chlorophenolicus).